Here is a 239-residue protein sequence, read N- to C-terminus: MGRKWANIKEKKASKDKTNSRIYAKFGIEIYVAAKSGDPDPHSNQKLRFVIERAKTYNVPKHIIDRAIEKAKGTGDETYSELRYEGFGPNGSMIIVDALTNNVNRTASDVRAAYSKNGGNMGVSGSVAYMFDNTAIFGVEGKDADELLELLMEADIDVRDILDEDGQAIIYAEPEDFHKVQEGLKAAGIEEFTVAEIEMIPQNDIQLSGEDLEKFEKLIDALEDLEDVQKVYHNVELED.

This sequence belongs to the TACO1 family. YeeN subfamily.

The protein resides in the cytoplasm. The protein is Probable transcriptional regulatory protein lin0388 of Listeria innocua serovar 6a (strain ATCC BAA-680 / CLIP 11262).